Reading from the N-terminus, the 227-residue chain is Ribosomal RNA small subunit methyltransferase G (227 aa).

S-adenosyl-L-methionine contacts are provided by residues G74, L79, 124-125 (AE), and R142.

This sequence belongs to the methyltransferase superfamily. RNA methyltransferase RsmG family.

The protein localises to the cytoplasm. In terms of biological role, specifically methylates the N7 position of guanine in position 518 of 16S rRNA. The chain is Ribosomal RNA small subunit methyltransferase G from Mycolicibacterium gilvum (strain PYR-GCK) (Mycobacterium gilvum (strain PYR-GCK)).